A 183-amino-acid polypeptide reads, in one-letter code: MDSEFFQPVYPRHYGECLSPTSTPSFFSTHMYTILIAIVVLVIIIIVLIYLFSSRKKKAAAAIEEEDIQFINPYQDQQWAEVTPQPGTSKPAGATTASAGKPVTGRPATNRPATNKPVTDNPVTDRLVMATGGPAAAPAAASAHPTEPYTTVTTQNTASQTMSAIENLRQRNTYTHKDLENSL.

A helical membrane pass occupies residues 32 to 52 (YTILIAIVVLVIIIIVLIYLF). The disordered stretch occupies residues 81-157 (EVTPQPGTSK…PYTTVTTQNT (77 aa)). Polar residues predominate over residues 111–122 (RPATNKPVTDNP). The segment covering 130–143 (ATGGPAAAPAAASA) has biased composition (low complexity). The interaction with host DYNLL1 stretch occupies residues 149 to 161 (YTTVTTQNTASQT).

This sequence belongs to the asfivirus envelope protein p54 family. In terms of assembly, interacts with the host light chain cytoplasmic dynein DYNLL1; this interaction is critical for intracellular microtubule-dependent virus transport toward viral factories.

It localises to the virion membrane. The protein resides in the host cytoplasm. Its subcellular location is the host cytoskeleton. It is found in the host endoplasmic reticulum membrane. Functionally, inner envelope protein involved, through its interaction with host dynein, in the intracellular microtubule-dependent transport of viral capsid toward viral factories. Seems to induce caspase-3 activation and apoptosis. Plays a role in virion morphogenesis by recruiting and transforming the host ER membranes into the precursors of the viral envelope. Involved in virus attachment to the host cell. This is Inner membrane protein p54 from Ornithodoros (relapsing fever ticks).